An 877-amino-acid polypeptide reads, in one-letter code: MKKKLVLIDGSSVAYRAFFALPLLHNDKGIHTNAVYGFTMMLNKILAEEEPTHMLVAFDAGKTTFRHEAFQEYKGGRQQTPPELSEQFPLLRELLRAYRIPAYELENYEADDIIGTLAARAEQEGFEVKVISGDRDLTQLASPHVTVDITKKGITDIEPYTPEAVREKYGLTPEQIVDLKGLMGDKSDNIPGVPGIGEKTAVKLLRQFGTVENVLASIDEIKGEKLKETLRQHREMALLSKKLAAIRRDAPVELSLDDIAYQGEDREKVVALFKELGFQSFLEKMESPSSEEEKPLAKMAFTLADRVTEEMLADKAALVVEVVEENYHDAPIVGIAVVNEHGRFFLRPETALADPQFVAWLGDETKKKSMFDSKRAAVALKWKGIELCGVSFDLLLAAYLLDPAQGVDDVAAAAKMKQYEAVRPDEAVYGKGAKRAVPDEPVLAEHLVRKAAAIWALERPFLDELRRNEQDRLLVELEQPLSSILAEMEFAGVKVDTKRLEQMGEELAEQLRTVEQRIYELAGQEFNINSPKQLGVILFEKLQLPVLKKSKTGYSTSADVLEKLAPYHEIVENILQHYRQLGKLQSTYIEGLLKVVRPDTKKVHTIFNQALTQTGRLSSTEPNLQNIPIRLEEGRKIRQAFVPSESDWLIFAADYSQIELRVLAHIAEDDNLMEAFRRDLDIHTKTAMDIFQVSEDEVTPNMRRQAKAVNFGIVYGISDYGLAQNLNISRKEAAEFIERYFESFPGVKRYMENIVQEAKQKGYVTTLLHRRRYLPDITSRNFNVRSFAERMAMNTPIQGSAADIIKKAMIDLNARLKEERLQARLLLQVHDELILEAPKEEMERLCRLVPEVMEQAVTLRVPLKVDYHYGSTWYDAK.

One can recognise a 5'-3' exonuclease domain in the interval 1–310 (MKKKLVLIDG…FTLADRVTEE (310 aa)). The 3'-5' exonuclease domain occupies 311 to 465 (MLADKAALVV…ALERPFLDEL (155 aa)). The polymerase stretch occupies residues 469–877 (EQDRLLVELE…HYGSTWYDAK (409 aa)).

It belongs to the DNA polymerase type-A family. As to quaternary structure, single-chain monomer with multiple functions.

The enzyme catalyses DNA(n) + a 2'-deoxyribonucleoside 5'-triphosphate = DNA(n+1) + diphosphate. In addition to polymerase activity, this DNA polymerase exhibits 3'-5' and 5'-3' exonuclease activity. The chain is DNA polymerase I (polA) from Bacillus caldotenax.